A 255-amino-acid polypeptide reads, in one-letter code: Syntaxin-23 (255 aa).

The interval 1-31 (MSFQDLEAGRGRSLASSRNINGGGSRQDTTQ) is disordered. An N-acetylserine modification is found at Ser-2. Over residues 14 to 31 (LASSRNINGGGSRQDTTQ) the composition is skewed to polar residues. In terms of domain architecture, t-SNARE coiled-coil homology spans 184-246 (EAVIEEREQG…AQGKSHLVRH (63 aa)).

Belongs to the syntaxin family. In terms of assembly, part of the t-SNARE complex. Interacts with RGS1. As to expression, expressed at higher levels in leaves, flowers and stems than in roots.

It localises to the membrane. May function in the docking or fusion of transport vesicles with the prevacuolar membrane. The chain is Syntaxin-23 (SYP23) from Arabidopsis thaliana (Mouse-ear cress).